The chain runs to 501 residues: Flagellin (501 aa).

It belongs to the bacterial flagellin family.

The protein resides in the secreted. The protein localises to the bacterial flagellum. Flagellin is the subunit protein which polymerizes to form the filaments of bacterial flagella. The sequence is that of Flagellin (flaA) from Aquifex pyrophilus.